Consider the following 290-residue polypeptide: Glyceraldehyde-3-phosphate dehydrogenase (290 aa).

NAD(+)-binding residues include Asp-13 and Arg-58. D-glyceraldehyde 3-phosphate-binding positions include 129–131, Thr-160, 189–190, and Arg-212; these read SCT and TG. Residue Cys-130 is the Nucleophile of the active site.

This sequence belongs to the glyceraldehyde-3-phosphate dehydrogenase family. Homotetramer.

Its subcellular location is the cytoplasm. The catalysed reaction is D-glyceraldehyde 3-phosphate + phosphate + NAD(+) = (2R)-3-phospho-glyceroyl phosphate + NADH + H(+). Its pathway is carbohydrate degradation; glycolysis; pyruvate from D-glyceraldehyde 3-phosphate: step 1/5. This is Glyceraldehyde-3-phosphate dehydrogenase (GPD) from Lactarius deterrimus (False saffron milkcap).